A 202-amino-acid polypeptide reads, in one-letter code: GTP cyclohydrolase-2 (202 aa).

Residue 49–53 (RIHSE) participates in GTP binding. 3 residues coordinate Zn(2+): cysteine 54, cysteine 65, and cysteine 67. GTP is bound by residues glutamine 70, 92 to 94 (EGR), and threonine 114. Catalysis depends on aspartate 126, which acts as the Proton acceptor. Arginine 128 serves as the catalytic Nucleophile. Residues threonine 149 and lysine 154 each contribute to the GTP site.

The protein belongs to the GTP cyclohydrolase II family. Requires Zn(2+) as cofactor.

It catalyses the reaction GTP + 4 H2O = 2,5-diamino-6-hydroxy-4-(5-phosphoribosylamino)-pyrimidine + formate + 2 phosphate + 3 H(+). It functions in the pathway cofactor biosynthesis; riboflavin biosynthesis; 5-amino-6-(D-ribitylamino)uracil from GTP: step 1/4. In terms of biological role, catalyzes the conversion of GTP to 2,5-diamino-6-ribosylamino-4(3H)-pyrimidinone 5'-phosphate (DARP), formate and pyrophosphate. This chain is GTP cyclohydrolase-2, found in Shewanella frigidimarina (strain NCIMB 400).